We begin with the raw amino-acid sequence, 371 residues long: Cysteine proteinase EP-B 1 (371 aa).

An N-terminal signal peptide occupies residues 1-28; the sequence is MGLLSKKLLVASMVAAVLAVAAVELCSA. The propeptide at 29–133 is activation peptide; it reads IPMEDKDLES…FMYAALNVSD (105 aa). Asparagine 130 carries N-linked (GlcNAc...) asparagine glycosylation. 3 cysteine pairs are disulfide-bonded: cysteine 155–cysteine 197, cysteine 189–cysteine 230, and cysteine 291–cysteine 343. Cysteine 158 is an active-site residue. Residues histidine 297 and asparagine 318 contribute to the active site.

Belongs to the peptidase C1 family.

The sequence is that of Cysteine proteinase EP-B 1 from Hordeum vulgare (Barley).